The chain runs to 326 residues: F-box/LRR-repeat protein 12 (326 aa).

An F-box domain is found at 1-47 (MATLFDLPDLVLLEIFSYLPVRDRIRISRVCHRWKRLVDDRWLWRHV). LRR repeat units lie at residues 51–78 (LYTM…RMGG), 86–111 (APQL…CLHV), 113–133 (DLSM…ELHS), 161–185 (VPAF…VLGG), 186–211 (TYRV…EVLG), 212–236 (CTLS…IRLT), 237–261 (VGGL…CFQG), and 266–291 (PDMP…EVQG).

Interacts with SKP1 and CUL1.

It participates in protein modification; protein ubiquitination. Substrate-recognition component of the SCF (SKP1-CUL1-F-box protein)-type E3 ubiquitin ligase complex. Mediates the polyubiquitination and proteasomal degradation of CAMK1 leading to disruption of cyclin D1/CDK4 complex assembly which results in G1 cell cycle arrest in lung epithelia. In Mus musculus (Mouse), this protein is F-box/LRR-repeat protein 12 (Fbxl12).